Reading from the N-terminus, the 113-residue chain is Hydrogenase maturation factor HypA (113 aa).

Histidine 2 is a Ni(2+) binding site. Zn(2+) contacts are provided by cysteine 73, cysteine 76, cysteine 89, and cysteine 92.

This sequence belongs to the HypA/HybF family.

Functionally, involved in the maturation of [NiFe] hydrogenases. Required for nickel insertion into the metal center of the hydrogenase. This Cereibacter sphaeroides (Rhodobacter sphaeroides) protein is Hydrogenase maturation factor HypA.